Here is a 342-residue protein sequence, read N- to C-terminus: tRNA N6-adenosine threonylcarbamoyltransferase (342 aa).

Fe cation is bound by residues histidine 115 and histidine 119. Residues 138–142 (IISGG), aspartate 171, glycine 184, aspartate 188, and asparagine 276 contribute to the substrate site. Residue aspartate 304 coordinates Fe cation.

The protein belongs to the KAE1 / TsaD family. The cofactor is Fe(2+).

The protein resides in the cytoplasm. It catalyses the reaction L-threonylcarbamoyladenylate + adenosine(37) in tRNA = N(6)-L-threonylcarbamoyladenosine(37) in tRNA + AMP + H(+). Required for the formation of a threonylcarbamoyl group on adenosine at position 37 (t(6)A37) in tRNAs that read codons beginning with adenine. Is involved in the transfer of the threonylcarbamoyl moiety of threonylcarbamoyl-AMP (TC-AMP) to the N6 group of A37, together with TsaE and TsaB. TsaD likely plays a direct catalytic role in this reaction. This Endomicrobium trichonymphae protein is tRNA N6-adenosine threonylcarbamoyltransferase.